The chain runs to 497 residues: Cytochrome P450 98A8 (497 aa).

Residues 2-19 (IIYLISLLPIIVATLMLY) traverse the membrane as a helical segment. A heme-binding site is contributed by C431.

This sequence belongs to the cytochrome P450 family. It depends on heme as a cofactor. As to expression, strongly expressed in inflorescence tips, young flower buds, seeds, stamen, tapetum and pollen.

It is found in the membrane. Its function is as follows. Acts redundantly with CYP98A9 as tricoumaroylspermidine meta-hydroxylase. Also catalyzes the meta-hydroxylation of the three triferuloylspermidine phenolic rings. Unable to use 5-O-(4-coumaroyl) D-quinate or 5-O-(4-coumaroyl) shikimate as substrates. The polypeptide is Cytochrome P450 98A8 (CYP98A8) (Arabidopsis thaliana (Mouse-ear cress)).